The sequence spans 771 residues: DNA polymerase 1 (771 aa).

This sequence belongs to the DNA polymerase type-B family.

The catalysed reaction is DNA(n) + a 2'-deoxyribonucleoside 5'-triphosphate = DNA(n+1) + diphosphate. This is DNA polymerase 1 (polI) from Pyrococcus abyssi.